The following is a 635-amino-acid chain: Frizzled and smoothened-like protein C (635 aa).

A signal peptide spans 1–20 (MKFKLIIFIIIIYIIKILKS). Over 21-244 (EILNEFGYGL…NKWVQMYKMS (224 aa)) the chain is Extracellular. Residues 32–166 (DENLKCLSFI…LTKYGYTENN (135 aa)) form the FZ domain. 2 disulfides stabilise this stretch: cysteine 37–cysteine 108 and cysteine 50–cysteine 101. 5 N-linked (GlcNAc...) asparagine glycosylation sites follow: asparagine 65, asparagine 141, asparagine 156, asparagine 185, and asparagine 203. Residues 245–265 (IVLSTLSFICSIYNIITFGLL) form a helical membrane-spanning segment. At 266–275 (SKLKSKYNLC) the chain is on the cytoplasmic side. The chain crosses the membrane as a helical span at residues 276-296 (ITFFSVSTVLMSLMDIVTYGI). Topologically, residues 297–314 (GYEELLCPESGRYAIQSD) are extracellular. Residues 315 to 335 (VACGVTGAFFHIGITTGVLWW) form a helical membrane-spanning segment. Over 336 to 356 (TTMSICLYSEVKRFKMISFRY) the chain is Cytoplasmic. The helical transmembrane segment at 357 to 377 (IIIFNSVISLILLIIPLSGQA) threads the bilayer. Over 378–398 (FMSGNGSLGCWIRKTWYANGT) the chain is Extracellular. 2 N-linked (GlcNAc...) asparagine glycosylation sites follow: asparagine 382 and asparagine 396. Residues 399-419 (FWIPCGISLFIGAICIVLVIY) form a helical membrane-spanning segment. Over 420 to 440 (EIFKISRNLSKDNKPLMFQIR) the chain is Cytoplasmic. The chain crosses the membrane as a helical span at residues 441-461 (PFLCVLLVGGSFLYLFIFYFN). Residues 462-496 (NERNLDKYKAAIPSYVQCLLSSDENGEDCLTDGPG) lie on the Extracellular side of the membrane. Residues 497-517 (FGAYFTFYFFTRLFGITSFSI) form a helical membrane-spanning segment. Topologically, residues 518–635 (YGTSKIARDI…SSKDSNTNSF (118 aa)) are cytoplasmic. Positions 559–594 (SISGSNQKRFNRNGSNFNMKQNKSNPNDSISLSVVE) are enriched in polar residues. Residues 559-635 (SISGSNQKRF…SSKDSNTNSF (77 aa)) form a disordered region. A coiled-coil region spans residues 594–623 (ESTKKQDTENELESNIETKENRSTDISIEN). Low complexity predominate over residues 623–635 (NTTSSKDSNTNSF).

It belongs to the G-protein coupled receptor Fz/Smo family.

It is found in the membrane. This chain is Frizzled and smoothened-like protein C (fslC), found in Dictyostelium discoideum (Social amoeba).